The following is a 535-amino-acid chain: Phosphoenolpyruvate carboxykinase (ATP) (535 aa).

Residues Arg59, Tyr201, and Lys207 each contribute to the substrate site. ATP contacts are provided by residues Lys207, His226, and 243-251 (GLSGTGKTT). Mn(2+)-binding residues include Lys207 and His226. Asp264 is a Mn(2+) binding site. Residues Glu292, Arg328, 444-445 (RI), and Thr450 each bind ATP. Position 328 (Arg328) interacts with substrate.

The protein belongs to the phosphoenolpyruvate carboxykinase (ATP) family. Requires Mn(2+) as cofactor.

Its subcellular location is the cytoplasm. The enzyme catalyses oxaloacetate + ATP = phosphoenolpyruvate + ADP + CO2. Its pathway is carbohydrate biosynthesis; gluconeogenesis. Functionally, involved in the gluconeogenesis. Catalyzes the conversion of oxaloacetate (OAA) to phosphoenolpyruvate (PEP) through direct phosphoryl transfer between the nucleoside triphosphate and OAA. The sequence is that of Phosphoenolpyruvate carboxykinase (ATP) from Bacteroides fragilis (strain ATCC 25285 / DSM 2151 / CCUG 4856 / JCM 11019 / LMG 10263 / NCTC 9343 / Onslow / VPI 2553 / EN-2).